A 186-amino-acid polypeptide reads, in one-letter code: ADP-ribosylation factor-like protein 6 (186 aa).

Residue Gly-2 is the site of N-myristoyl glycine attachment. Residues 24-31 (GLDNSGKT), Thr-50, 69-73 (DMSGQ), Gly-72, 130-133 (NKMD), and Ala-164 each bind GTP. Residue Thr-50 participates in Mg(2+) binding.

It belongs to the small GTPase superfamily. Arf family. As to expression, expressed in brain, heart and eye. Isoform 2 is expressed only in the retina.

Its subcellular location is the cell projection. The protein resides in the cilium membrane. It localises to the cytoplasm. It is found in the cytoskeleton. The protein localises to the cilium axoneme. Its subcellular location is the cilium basal body. Its function is as follows. Probably involved in membrane protein trafficking at the base of the ciliary organelle. May function in cilia biogenesis. Isoform 2 is required for proper retinal function and organization. This chain is ADP-ribosylation factor-like protein 6 (arl6), found in Danio rerio (Zebrafish).